Here is a 257-residue protein sequence, read N- to C-terminus: K88 minor fimbrial subunit FaeJ (257 aa).

The N-terminal stretch at 1–26 (MLNIIHRLKSGMFPALFFLTSASVLA) is a signal peptide.

It is found in the fimbrium. In terms of biological role, K88 minor fimbrial subunit, plays an essential role in the biogenesis of the K88 fimbriae. Fimbriae (also called pili), are polar filaments radiating from the surface of the bacterium to a length of 0.5-1.5 micrometers and numbering 100-300 per cell. They enable bacteria to colonize the epithelium of specific host organs. The sequence is that of K88 minor fimbrial subunit FaeJ (faeJ) from Escherichia coli.